The sequence spans 102 residues: Small ribosomal subunit protein uS10 (102 aa).

It belongs to the universal ribosomal protein uS10 family. In terms of assembly, part of the 30S ribosomal subunit.

Functionally, involved in the binding of tRNA to the ribosomes. This Methylobacterium radiotolerans (strain ATCC 27329 / DSM 1819 / JCM 2831 / NBRC 15690 / NCIMB 10815 / 0-1) protein is Small ribosomal subunit protein uS10.